Consider the following 524-residue polypeptide: Acetyl-CoA hydrolase (524 aa).

Residue 279–283 (GIGNI) participates in CoA binding. Glu304 serves as the catalytic 5-glutamyl coenzyme A thioester intermediate. Residue Gly398 coordinates CoA.

Belongs to the acetyl-CoA hydrolase/transferase family.

It localises to the cytoplasm. The catalysed reaction is acetyl-CoA + H2O = acetate + CoA + H(+). Presumably involved in regulating the intracellular acetyl-CoA pool for fatty acid and cholesterol synthesis and fatty acid oxidation. The polypeptide is Acetyl-CoA hydrolase (ACH1) (Yarrowia lipolytica (strain CLIB 122 / E 150) (Yeast)).